The sequence spans 404 residues: Probable tRNA sulfurtransferase (404 aa).

One can recognise a THUMP domain in the interval 61-166 (EAVSERLKDV…SGYSYIMCDE (106 aa)). Residues 184–185 (LL), 209–210 (HF), Arg-266, Gly-288, and Gln-297 contribute to the ATP site.

It belongs to the ThiI family.

It is found in the cytoplasm. It carries out the reaction [ThiI sulfur-carrier protein]-S-sulfanyl-L-cysteine + a uridine in tRNA + 2 reduced [2Fe-2S]-[ferredoxin] + ATP + H(+) = [ThiI sulfur-carrier protein]-L-cysteine + a 4-thiouridine in tRNA + 2 oxidized [2Fe-2S]-[ferredoxin] + AMP + diphosphate. The catalysed reaction is [ThiS sulfur-carrier protein]-C-terminal Gly-Gly-AMP + S-sulfanyl-L-cysteinyl-[cysteine desulfurase] + AH2 = [ThiS sulfur-carrier protein]-C-terminal-Gly-aminoethanethioate + L-cysteinyl-[cysteine desulfurase] + A + AMP + 2 H(+). It participates in cofactor biosynthesis; thiamine diphosphate biosynthesis. Catalyzes the ATP-dependent transfer of a sulfur to tRNA to produce 4-thiouridine in position 8 of tRNAs, which functions as a near-UV photosensor. Also catalyzes the transfer of sulfur to the sulfur carrier protein ThiS, forming ThiS-thiocarboxylate. This is a step in the synthesis of thiazole, in the thiamine biosynthesis pathway. The sulfur is donated as persulfide by IscS. The chain is Probable tRNA sulfurtransferase from Bacillus cereus (strain AH187).